We begin with the raw amino-acid sequence, 241 residues long: MIITGHLILVRHGEPGLKPGERLSGWIDIPLSRKGIEEALECAKALENIEIDIAFASDLVRTQETLFIILSGQKKTGVVVHEKTEDKVPPEKLDWYSYPEKLGEDLIPVYTTPALNERYYGKLQGRKKQKMEEKYGAEQVANWRWNFEPGPPEGESLKAVYERTVPYFRKKVMPALEGGKNVLICAHQSSLRALVKYIEDISDKDIREVRLSTGELAIYHFSEGKLVRENEELGPELKRNI.

Histidine 12 (tele-phosphohistidine intermediate) is an active-site residue. Substrate is bound by residues serine 24–glycine 25, arginine 61, glutamate 117–tyrosine 120, and lysine 128. The active-site Proton donor/acceptor is glutamate 117.

The protein belongs to the phosphoglycerate mutase family. BPG-dependent PGAM subfamily.

The enzyme catalyses (2R)-2-phosphoglycerate = (2R)-3-phosphoglycerate. Its pathway is carbohydrate degradation; glycolysis; pyruvate from D-glyceraldehyde 3-phosphate: step 3/5. In terms of biological role, catalyzes the interconversion of 2-phosphoglycerate and 3-phosphoglycerate. The chain is 2,3-bisphosphoglycerate-dependent phosphoglycerate mutase from Methanosarcina mazei (strain ATCC BAA-159 / DSM 3647 / Goe1 / Go1 / JCM 11833 / OCM 88) (Methanosarcina frisia).